The sequence spans 249 residues: Triosephosphate isomerase (249 aa).

Substrate is bound by residues N12 and K14. At K14 the chain carries N6-acetyllysine. Y68 is modified (3'-nitrotyrosine). S80 is modified (phosphoserine). The active-site Electrophile is the H96. S106 carries the post-translational modification Phosphoserine. A Glycyl lysine isopeptide (Lys-Gly) (interchain with G-Cter in SUMO1) cross-link involves residue K142. K149 bears the N6-succinyllysine mark. An N6-acetyllysine; alternate modification is found at K156. The residue at position 156 (K156) is an N6-succinyllysine; alternate. Phosphoserine is present on S159. The active-site Proton acceptor is the E166. Phosphothreonine is present on T173. K194 is subject to N6-acetyllysine; alternate. The residue at position 194 (K194) is an N6-succinyllysine; alternate. K194 is modified (N6-methyllysine; alternate). At S198 the chain carries Phosphoserine. Y209 carries the post-translational modification 3'-nitrotyrosine. Residue S212 is modified to Phosphoserine. T214 carries the post-translational modification Phosphothreonine. S223 carries the post-translational modification Phosphoserine. K238 is subject to N6-acetyllysine.

Belongs to the triosephosphate isomerase family. Homodimer.

It localises to the cytoplasm. It carries out the reaction dihydroxyacetone phosphate = methylglyoxal + phosphate. It catalyses the reaction D-glyceraldehyde 3-phosphate = dihydroxyacetone phosphate. Its pathway is carbohydrate degradation; glycolysis; D-glyceraldehyde 3-phosphate from glycerone phosphate: step 1/1. It participates in carbohydrate biosynthesis; gluconeogenesis. Functionally, triosephosphate isomerase is an extremely efficient metabolic enzyme that catalyzes the interconversion between dihydroxyacetone phosphate (DHAP) and D-glyceraldehyde-3-phosphate (G3P) in glycolysis and gluconeogenesis. Its function is as follows. It is also responsible for the non-negligible production of methylglyoxal a reactive cytotoxic side-product that modifies and can alter proteins, DNA and lipids. This Gorilla gorilla gorilla (Western lowland gorilla) protein is Triosephosphate isomerase (TPI1).